We begin with the raw amino-acid sequence, 305 residues long: tRNA pseudouridine synthase B (305 aa).

D39 functions as the Nucleophile in the catalytic mechanism.

The protein belongs to the pseudouridine synthase TruB family. Type 1 subfamily.

It carries out the reaction uridine(55) in tRNA = pseudouridine(55) in tRNA. Functionally, responsible for synthesis of pseudouridine from uracil-55 in the psi GC loop of transfer RNAs. This is tRNA pseudouridine synthase B from Staphylococcus aureus (strain MW2).